Here is a 365-residue protein sequence, read N- to C-terminus: UDP-N-acetylglucosamine--N-acetylmuramyl-(pentapeptide) pyrophosphoryl-undecaprenol N-acetylglucosamine transferase (365 aa).

UDP-N-acetyl-alpha-D-glucosamine is bound by residues 19-21, asparagine 131, arginine 170, serine 201, isoleucine 255, 274-279, and glutamine 300; these read TGG and ALTVTE.

It belongs to the glycosyltransferase 28 family. MurG subfamily.

The protein localises to the cell inner membrane. It catalyses the reaction di-trans,octa-cis-undecaprenyl diphospho-N-acetyl-alpha-D-muramoyl-L-alanyl-D-glutamyl-meso-2,6-diaminopimeloyl-D-alanyl-D-alanine + UDP-N-acetyl-alpha-D-glucosamine = di-trans,octa-cis-undecaprenyl diphospho-[N-acetyl-alpha-D-glucosaminyl-(1-&gt;4)]-N-acetyl-alpha-D-muramoyl-L-alanyl-D-glutamyl-meso-2,6-diaminopimeloyl-D-alanyl-D-alanine + UDP + H(+). The protein operates within cell wall biogenesis; peptidoglycan biosynthesis. In terms of biological role, cell wall formation. Catalyzes the transfer of a GlcNAc subunit on undecaprenyl-pyrophosphoryl-MurNAc-pentapeptide (lipid intermediate I) to form undecaprenyl-pyrophosphoryl-MurNAc-(pentapeptide)GlcNAc (lipid intermediate II). The sequence is that of UDP-N-acetylglucosamine--N-acetylmuramyl-(pentapeptide) pyrophosphoryl-undecaprenol N-acetylglucosamine transferase from Acinetobacter baumannii (strain SDF).